Consider the following 362-residue polypeptide: Peptide chain release factor 1 (362 aa).

Position 237 is an N5-methylglutamine (Gln-237). Basic and acidic residues predominate over residues 282–296 (QQEEDKRRAEADSTR). The interval 282 to 304 (QQEEDKRRAEADSTRRSILSTGD) is disordered.

It belongs to the prokaryotic/mitochondrial release factor family. Methylated by PrmC. Methylation increases the termination efficiency of RF1.

The protein resides in the cytoplasm. Peptide chain release factor 1 directs the termination of translation in response to the peptide chain termination codons UAG and UAA. The chain is Peptide chain release factor 1 from Tolumonas auensis (strain DSM 9187 / NBRC 110442 / TA 4).